The following is a 308-amino-acid chain: Putative acetyl-hydrolase LipR (308 aa).

An N-terminal signal peptide occupies residues 1–40; that stretch reads MNLRKNVIRSVLRGARPLFASRRLGIAGRRVLLATLTAGA. Residues 76-78 carry the Involved in the stabilization of the negatively charged intermediate by the formation of the oxyanion hole motif; it reads HGG. Active-site residues include S146, D239, and H269.

It belongs to the 'GDXG' lipolytic enzyme family.

Required for maintaining the appropriate mycolic acid composition and permeability of the envelope on its exposure to acidic pH. This is Putative acetyl-hydrolase LipR (lipR) from Mycobacterium tuberculosis (strain ATCC 25618 / H37Rv).